Here is a 470-residue protein sequence, read N- to C-terminus: Glucose-1-phosphate adenylyltransferase large subunit 1 (470 aa).

It belongs to the bacterial/plant glucose-1-phosphate adenylyltransferase family. Heterotetramer. In terms of tissue distribution, prominently expressed in the leaves and a weaker expression is seen in the tubers.

It is found in the plastid. The protein resides in the chloroplast. The protein localises to the amyloplast. The enzyme catalyses alpha-D-glucose 1-phosphate + ATP + H(+) = ADP-alpha-D-glucose + diphosphate. Its pathway is glycan biosynthesis; starch biosynthesis. Activated by 3'phosphoglycerate, inhibited by orthophosphate. Allosteric regulation. Its function is as follows. This protein plays a role in synthesis of starch. It catalyzes the synthesis of the activated glycosyl donor, ADP-glucose from Glc-1-P and ATP. The protein is Glucose-1-phosphate adenylyltransferase large subunit 1 (AGPS1) of Solanum tuberosum (Potato).